The following is a 131-amino-acid chain: Small ribosomal subunit protein eS8 (131 aa).

Positions 1 to 42 are disordered; that stretch reads MKLGAYYKGGDLKKPSGGKKRKVRKTKKKALGGGPPQIPKLG. Basic residues predominate over residues 16 to 30; the sequence is SGGKKRKVRKTKKKA.

This sequence belongs to the eukaryotic ribosomal protein eS8 family. As to quaternary structure, part of the 30S ribosomal subunit.

This is Small ribosomal subunit protein eS8 from Pyrobaculum aerophilum (strain ATCC 51768 / DSM 7523 / JCM 9630 / CIP 104966 / NBRC 100827 / IM2).